A 547-amino-acid chain; its full sequence is uncharacterized protein (547 aa).

This sequence to B.subtilis RocB.

This is an uncharacterized protein from Bacillus subtilis (strain 168).